The sequence spans 752 residues: MAISSTERRSKNVQVFVEKDAVETSFAKWAQPGHFSRTLAKGPKTTTWIWNLHADAHDFDSQTSSLEEVSRKIFSAHFGQLAIIFLWISGMHFHGAYFSNYSAWLTDPISIKQSSQVVWPIVGQEILNADVGGNFQGIQTTSGWFQMWRAEGITSEVELYWTAIGGLAMSAIMLFAGWFHYHKAAPKLEWFQNAESMMNHHLAGLLGLGCLSWSGHQIHIALPINKLLDAGVSPQEIPLPHEFLINRDLMAQLYPSFSKGLAPFFGGNWGEYSDFLTFKGGLNPVTGGLWLSDIAHHHLALSVLFIIAGHMYRTNWGIGHNMKEILEAHKGPFTGEGHKGLYEILTTSWHAQLAINLAMMGSLSIIVAHHMYAMPPYPYLATDYATQLSLFTHHMWIGGFCVVGGAAHGAIFMVRDYTPANNYNNLLDRVLRHRDAIISHLNWVCIFLGCHAFGFYIHNDTMRALGRPQDMFSDKAIQLQPIFAQWIQNIHLLAPGTTAPNALATTSYAFGGDVIEVGGKIAMMPIKLGTADFMVHHIHAFTIHVTVLILLKGVLYARSSKLIPDKANLGFRFPCDGPGRGGTCQSSSWDHVFLGLFWMYNSISVVIFHFSWKMQSDVWGTITPDGAISHITGGNFAQSSITINGWLRDFLWSQASQVIQSYGSASSAYGLIFLGAHFIWAFSLMFLFSGRGYWQELIESIVWAHNKLNFAPTIQPRALSITQGRAVGLAHYLLGGIGTTWAFFLARAISIT.

8 helical membrane-spanning segments follow: residues 73-96 (IFSA…FHGA), 159-182 (LYWT…FHYH), 198-222 (MNHH…HIAL), 294-312 (IAHH…GHMY), 349-372 (WHAQ…HHMY), 388-414 (LSLF…IFMV), 436-458 (AIIS…FYIH), and 533-551 (FMVH…LILL). Positions 575 and 584 each coordinate [4Fe-4S] cluster. 2 consecutive transmembrane segments (helical) span residues 591-612 (HVFL…HFSW) and 666-688 (SSAY…MFLF). His-677 contributes to the chlorophyll a' binding site. The chlorophyll a site is built by Met-685 and Tyr-693. A phylloquinone-binding site is contributed by Trp-694. Residues 726-746 (AVGLAHYLLGGIGTTWAFFLA) traverse the membrane as a helical segment.

This sequence belongs to the PsaA/PsaB family. The PsaA/B heterodimer binds the P700 chlorophyll special pair and subsequent electron acceptors. PSI consists of a core antenna complex that captures photons, and an electron transfer chain that converts photonic excitation into a charge separation. The eukaryotic PSI reaction center is composed of at least 11 subunits. It depends on P700 is a chlorophyll a/chlorophyll a' dimer, A0 is one or more chlorophyll a, A1 is one or both phylloquinones and FX is a shared 4Fe-4S iron-sulfur center. as a cofactor.

It is found in the plastid. Its subcellular location is the chloroplast thylakoid membrane. It carries out the reaction reduced [plastocyanin] + hnu + oxidized [2Fe-2S]-[ferredoxin] = oxidized [plastocyanin] + reduced [2Fe-2S]-[ferredoxin]. Functionally, psaA and PsaB bind P700, the primary electron donor of photosystem I (PSI), as well as the electron acceptors A0, A1 and FX. PSI is a plastocyanin/cytochrome c6-ferredoxin oxidoreductase, converting photonic excitation into a charge separation, which transfers an electron from the donor P700 chlorophyll pair to the spectroscopically characterized acceptors A0, A1, FX, FA and FB in turn. Oxidized P700 is reduced on the lumenal side of the thylakoid membrane by plastocyanin or cytochrome c6. The protein is Photosystem I P700 chlorophyll a apoprotein A1 of Thalassiosira pseudonana (Marine diatom).